Reading from the N-terminus, the 399-residue chain is CCA-adding enzyme (399 aa).

ATP contacts are provided by G28 and R31. Residues G28 and R31 each contribute to the CTP site. 2 residues coordinate Mg(2+): D41 and D43. ATP is bound by residues R112, D155, R158, R161, and R164. CTP-binding residues include R112, D155, R158, R161, and R164.

It belongs to the tRNA nucleotidyltransferase/poly(A) polymerase family. Bacterial CCA-adding enzyme type 3 subfamily. In terms of assembly, homodimer. It depends on Mg(2+) as a cofactor.

It catalyses the reaction a tRNA precursor + 2 CTP + ATP = a tRNA with a 3' CCA end + 3 diphosphate. It carries out the reaction a tRNA with a 3' CCA end + 2 CTP + ATP = a tRNA with a 3' CCACCA end + 3 diphosphate. Its function is as follows. Catalyzes the addition and repair of the essential 3'-terminal CCA sequence in tRNAs without using a nucleic acid template. Adds these three nucleotides in the order of C, C, and A to the tRNA nucleotide-73, using CTP and ATP as substrates and producing inorganic pyrophosphate. tRNA 3'-terminal CCA addition is required both for tRNA processing and repair. Also involved in tRNA surveillance by mediating tandem CCA addition to generate a CCACCA at the 3' terminus of unstable tRNAs. While stable tRNAs receive only 3'-terminal CCA, unstable tRNAs are marked with CCACCA and rapidly degraded. This is CCA-adding enzyme from Staphylococcus saprophyticus subsp. saprophyticus (strain ATCC 15305 / DSM 20229 / NCIMB 8711 / NCTC 7292 / S-41).